Consider the following 407-residue polypeptide: Putative mannan endo-1,4-beta-mannosidase 9 (407 aa).

An N-terminal signal peptide occupies residues Met-1–Ala-31. Residues Trp-95 and Asn-208 each contribute to the substrate site. The Proton donor role is filled by Glu-209. Tyr-284 is a binding site for substrate. Residue Glu-324 is the Nucleophile of the active site. Trp-366 lines the substrate pocket.

Belongs to the glycosyl hydrolase 5 (cellulase A) family. As to expression, expression not detected.

The protein resides in the secreted. It carries out the reaction Random hydrolysis of (1-&gt;4)-beta-D-mannosidic linkages in mannans, galactomannans and glucomannans.. The sequence is that of Putative mannan endo-1,4-beta-mannosidase 9 (MAN9) from Oryza sativa subsp. japonica (Rice).